The sequence spans 459 residues: Cysteine--tRNA ligase (459 aa).

C28 is a binding site for Zn(2+). The 'HIGH' region motif lies at 30–40 (VTIYDLCHIGH). Zn(2+)-binding residues include C209, H234, and E238. Residues 266–270 (KMSKS) carry the 'KMSKS' region motif. K269 contributes to the ATP binding site.

The protein belongs to the class-I aminoacyl-tRNA synthetase family. As to quaternary structure, monomer. The cofactor is Zn(2+).

The protein resides in the cytoplasm. The enzyme catalyses tRNA(Cys) + L-cysteine + ATP = L-cysteinyl-tRNA(Cys) + AMP + diphosphate. This chain is Cysteine--tRNA ligase, found in Shewanella baltica (strain OS195).